The sequence spans 110 residues: Large ribosomal subunit protein uL22 (110 aa).

Belongs to the universal ribosomal protein uL22 family. Part of the 50S ribosomal subunit.

Functionally, this protein binds specifically to 23S rRNA; its binding is stimulated by other ribosomal proteins, e.g. L4, L17, and L20. It is important during the early stages of 50S assembly. It makes multiple contacts with different domains of the 23S rRNA in the assembled 50S subunit and ribosome. Its function is as follows. The globular domain of the protein is located near the polypeptide exit tunnel on the outside of the subunit, while an extended beta-hairpin is found that lines the wall of the exit tunnel in the center of the 70S ribosome. This is Large ribosomal subunit protein uL22 from Delftia acidovorans (strain DSM 14801 / SPH-1).